Here is a 286-residue protein sequence, read N- to C-terminus: Flagellin FlaB2 (286 aa).

It belongs to the bacterial flagellin family. In terms of assembly, the flagellum consists of an outer layer composed of repeating units of FlaA around a core that contains several antigenically related polypeptides. Interacts with FliW; a synthetic peptide of FlaB1 (residues 229-247) partially blocks binding of this protein to FliW.

The protein resides in the periplasmic flagellum. The protein localises to the periplasm. Component of the core of the flagella. This Treponema pallidum (strain Nichols) protein is Flagellin FlaB2.